A 115-amino-acid chain; its full sequence is Large ribosomal subunit protein eL30 (115 aa).

The protein belongs to the eukaryotic ribosomal protein eL30 family. Component of the large ribosomal subunit.

The protein resides in the cytoplasm. Functionally, component of the large ribosomal subunit. The ribosome is a large ribonucleoprotein complex responsible for the synthesis of proteins in the cell. This is Large ribosomal subunit protein eL30 (RPL30) from Gallus gallus (Chicken).